Consider the following 493-residue polypeptide: Cobyric acid synthase (493 aa).

The GATase cobBQ-type domain occupies 246 to 440 (PIDIAVIKMP…IHGVFDGVAF (195 aa)). Cys-326 functions as the Nucleophile in the catalytic mechanism. His-432 is an active-site residue.

It belongs to the CobB/CobQ family. CobQ subfamily.

It functions in the pathway cofactor biosynthesis; adenosylcobalamin biosynthesis. Its function is as follows. Catalyzes amidations at positions B, D, E, and G on adenosylcobyrinic A,C-diamide. NH(2) groups are provided by glutamine, and one molecule of ATP is hydrogenolyzed for each amidation. The sequence is that of Cobyric acid synthase from Clostridium botulinum (strain Loch Maree / Type A3).